The sequence spans 315 residues: Methionyl-tRNA formyltransferase (315 aa).

115-118 is a (6S)-5,6,7,8-tetrahydrofolate binding site; it reads SLLP.

This sequence belongs to the Fmt family.

It catalyses the reaction L-methionyl-tRNA(fMet) + (6R)-10-formyltetrahydrofolate = N-formyl-L-methionyl-tRNA(fMet) + (6S)-5,6,7,8-tetrahydrofolate + H(+). Functionally, attaches a formyl group to the free amino group of methionyl-tRNA(fMet). The formyl group appears to play a dual role in the initiator identity of N-formylmethionyl-tRNA by promoting its recognition by IF2 and preventing the misappropriation of this tRNA by the elongation apparatus. The protein is Methionyl-tRNA formyltransferase of Dehalococcoides mccartyi (strain ATCC BAA-2100 / JCM 16839 / KCTC 5957 / BAV1).